Reading from the N-terminus, the 253-residue chain is MQGQNQQQAYDRGITIFSPDGRLYQVEYAREAVKRGTASIGVRTPEGVVLVVDKQTRSPLLEGSSVEKLHKIDDHVGAASAGHVADARQLVDFARQQSQVERVRYDEPIGVRTLTKSVTDHIQQYTQVGGARPFGVALLIAGVEGGEPRLFETDPSGTSNEWKAVAIGSNRGDIQEFLEDEYDAGLSVDDGIDLALRALNEGREDALSGDGVGVGIVDADTGTYRELAADESQSYIDDIEDAADDSDDDDDEE.

The segment at 229-253 is disordered; that stretch reads ADESQSYIDDIEDAADDSDDDDDEE. A compositionally biased stretch (acidic residues) spans 237–253; it reads DDIEDAADDSDDDDDEE.

The protein belongs to the peptidase T1A family. As to quaternary structure, the 20S proteasome core is composed of 14 alpha and 14 beta subunits that assemble into four stacked heptameric rings, resulting in a barrel-shaped structure. The two inner rings, each composed of seven catalytic beta subunits, are sandwiched by two outer rings, each composed of seven alpha subunits. The catalytic chamber with the active sites is on the inside of the barrel. Has a gated structure, the ends of the cylinder being occluded by the N-termini of the alpha-subunits. Is capped at one or both ends by the proteasome regulatory ATPase, PAN.

Its subcellular location is the cytoplasm. Its activity is regulated as follows. The formation of the proteasomal ATPase PAN-20S proteasome complex, via the docking of the C-termini of PAN into the intersubunit pockets in the alpha-rings, triggers opening of the gate for substrate entry. Interconversion between the open-gate and close-gate conformations leads to a dynamic regulation of the 20S proteasome proteolysis activity. Functionally, component of the proteasome core, a large protease complex with broad specificity involved in protein degradation. The chain is Proteasome subunit alpha from Halobacterium salinarum (strain ATCC 29341 / DSM 671 / R1).